Consider the following 127-residue polypeptide: Small ribosomal subunit protein uS11 (127 aa).

It belongs to the universal ribosomal protein uS11 family. In terms of assembly, part of the 30S ribosomal subunit. Interacts with proteins S7 and S18. Binds to IF-3.

Functionally, located on the platform of the 30S subunit, it bridges several disparate RNA helices of the 16S rRNA. Forms part of the Shine-Dalgarno cleft in the 70S ribosome. The polypeptide is Small ribosomal subunit protein uS11 (Flavobacterium psychrophilum (strain ATCC 49511 / DSM 21280 / CIP 103535 / JIP02/86)).